The following is a 374-amino-acid chain: Chaperone protein DnaJ (374 aa).

The 66-residue stretch at 5–70 (DYYEVLGVAR…NKRRMYDSHG (66 aa)) folds into the J domain. A CR-type zinc finger spans residues 130 to 207 (GVERRIEIPT…CHGNGRVEED (78 aa)). 8 residues coordinate Zn(2+): cysteine 143, cysteine 146, cysteine 159, cysteine 162, cysteine 181, cysteine 184, cysteine 195, and cysteine 198. 4 CXXCXGXG motif repeats span residues 143–150 (CGDCDGSG), 159–166 (CNVCHGRG), 181–188 (CHNCGGRG), and 195–202 (CKTCHGNG).

The protein belongs to the DnaJ family. Homodimer. Zn(2+) serves as cofactor.

It is found in the cytoplasm. In terms of biological role, participates actively in the response to hyperosmotic and heat shock by preventing the aggregation of stress-denatured proteins and by disaggregating proteins, also in an autonomous, DnaK-independent fashion. Unfolded proteins bind initially to DnaJ; upon interaction with the DnaJ-bound protein, DnaK hydrolyzes its bound ATP, resulting in the formation of a stable complex. GrpE releases ADP from DnaK; ATP binding to DnaK triggers the release of the substrate protein, thus completing the reaction cycle. Several rounds of ATP-dependent interactions between DnaJ, DnaK and GrpE are required for fully efficient folding. Also involved, together with DnaK and GrpE, in the DNA replication of plasmids through activation of initiation proteins. In Stenotrophomonas maltophilia (strain K279a), this protein is Chaperone protein DnaJ.